Consider the following 649-residue polypeptide: Endoglucanase D (649 aa).

Positions 1-41 (MSRMTLKSSMKKRVLSLLIAVVFLSLTGVFPSGLIETKVSA) are cleaved as a signal peptide. Asp-201 (nucleophile) is an active-site residue. Active-site residues include His-516 and Asp-546. The Proton donor role is filled by Glu-555. The Dockerin domain occupies 579–649 (NEVLYGDVND…LIRVIEKLPI (71 aa)).

It belongs to the glycosyl hydrolase 9 (cellulase E) family. Ca(2+) is required as a cofactor.

It carries out the reaction Endohydrolysis of (1-&gt;4)-beta-D-glucosidic linkages in cellulose, lichenin and cereal beta-D-glucans.. In terms of biological role, this enzyme catalyzes the endohydrolysis of 1,4-beta-glucosidic linkages in cellulose, lichenin and cereal beta-D-glucans. In Acetivibrio thermocellus (strain ATCC 27405 / DSM 1237 / JCM 9322 / NBRC 103400 / NCIMB 10682 / NRRL B-4536 / VPI 7372) (Clostridium thermocellum), this protein is Endoglucanase D (celD).